Consider the following 2727-residue polypeptide: E3 ubiquitin-protein ligase Ufd4 (2727 aa).

2 disordered regions span residues 247–271 (THSS…TNSD) and 365–389 (RGSN…TDRT). Polar residues predominate over residues 365–374 (RGSNNPNQGQ). ANK repeat units follow at residues 422 to 451 (VGQT…DVNK), 453 to 482 (QRSS…YPDL), and 486 to 518 (DGKT…WMSP). Residues 682–702 (AQRSSTSVVVAPRPTSDDPME) are disordered. The MIB/HERC2 domain maps to 1322 to 1392 (QIRAQLKHMT…KYDLKLADCE (71 aa)). Polar residues-rich tracts occupy residues 1401-1430 (QSMG…STPS) and 1437-1448 (KNQNPEGASNQT). Disordered regions lie at residues 1401-1448 (QSMG…SNQT), 1483-1512 (NTSS…GPSP), 1570-1592 (ESVT…REND), 1845-1871 (YPSL…QQSA), 1905-1930 (ALLG…DEYE), and 2092-2115 (STCL…ASTL). The segment covering 1575–1592 (SQSSSHPDVQSSSPREND) has biased composition (low complexity). Acidic residues predominate over residues 1909 to 1930 (DLDDEDDMDEDNDEEENEDEYE). The segment covering 2104 to 2115 (PDVSSKSGASTL) has biased composition (polar residues). In terms of domain architecture, HECT spans 2289–2727 (RKSVLEVEFL…ATKEKGFHLN (439 aa)). Cys2696 acts as the Glycyl thioester intermediate in catalysis.

This sequence belongs to the UPL family. K-HECT subfamily.

The catalysed reaction is S-ubiquitinyl-[E2 ubiquitin-conjugating enzyme]-L-cysteine + [acceptor protein]-L-lysine = [E2 ubiquitin-conjugating enzyme]-L-cysteine + N(6)-ubiquitinyl-[acceptor protein]-L-lysine.. It functions in the pathway protein modification; protein ubiquitination. Functionally, E3 ubiquitin-protein ligase which accepts ubiquitin from an E2 ubiquitin-conjugating enzyme in the form of a thioester and then directly transfers the ubiquitin to targeted substrates. Involved in the negative regulation of the Ras/MAPK signaling pathway in the wing by acting with the E2 enzyme Unc6 and the putative E3 ligases poe and Kcmf1 to mediate the ubiquitination and proteasomal degradation of rl/MAPK. The sequence is that of E3 ubiquitin-protein ligase Ufd4 from Drosophila melanogaster (Fruit fly).